We begin with the raw amino-acid sequence, 559 residues long: Glucosylglycerate phosphorylase (559 aa).

Asp229 serves as the catalytic Nucleophile.

It belongs to the glycosyl hydrolase 13 family. Glucosylglycerate phosphorylase subfamily.

It carries out the reaction (2R)-2-O-(alpha-D-glucopyranosyl)-glycerate + phosphate = (R)-glycerate + alpha-D-glucose 1-phosphate. Catalyzes the reversible phosphorolysis of glucosylglycerate into alpha-D-glucose 1-phosphate (Glc1P) and D-glycerate (also called (R)-glycerate). May be a regulator of intracellular levels of glucosylglycerate, a compatible solute that primarily protects organisms facing salt stress and very specific nutritional constraints. Cannot catalyze the phosphorolysis of sucrose. Does not act on other sugars such as alpha-D-galactose 1-phosphate, alpha-D-mannose 1-phosphate or beta-D-glucose 1-phosphate; in vitro D-erythronate can substitute for D-glycerate with a much lower efficiency. The sequence is that of Glucosylglycerate phosphorylase (ycjM) from Escherichia coli (strain K12).